The sequence spans 353 residues: Ferredoxin--NADP reductase (353 aa).

Residues Thr-25, Glu-44, Gln-52, Tyr-57, Val-97, Phe-132, Asp-298, and Ser-339 each contribute to the FAD site.

It belongs to the ferredoxin--NADP reductase type 2 family. Homodimer. It depends on FAD as a cofactor.

It carries out the reaction 2 reduced [2Fe-2S]-[ferredoxin] + NADP(+) + H(+) = 2 oxidized [2Fe-2S]-[ferredoxin] + NADPH. This Chlorobium chlorochromatii (strain CaD3) protein is Ferredoxin--NADP reductase.